Consider the following 79-residue polypeptide: uncharacterized protein (79 aa).

This is an uncharacterized protein from Sulfolobus islandicus filamentous virus (isolate Iceland/Hveragerdi) (SIFV).